Reading from the N-terminus, the 203-residue chain is ATP-dependent Clp protease proteolytic subunit (203 aa).

The active-site Nucleophile is S107. H132 is a catalytic residue.

The protein belongs to the peptidase S14 family. Fourteen ClpP subunits assemble into 2 heptameric rings which stack back to back to give a disk-like structure with a central cavity, resembling the structure of eukaryotic proteasomes.

The protein resides in the cytoplasm. It catalyses the reaction Hydrolysis of proteins to small peptides in the presence of ATP and magnesium. alpha-casein is the usual test substrate. In the absence of ATP, only oligopeptides shorter than five residues are hydrolyzed (such as succinyl-Leu-Tyr-|-NHMec, and Leu-Tyr-Leu-|-Tyr-Trp, in which cleavage of the -Tyr-|-Leu- and -Tyr-|-Trp bonds also occurs).. Functionally, cleaves peptides in various proteins in a process that requires ATP hydrolysis. Has a chymotrypsin-like activity. Plays a major role in the degradation of misfolded proteins. This Shewanella denitrificans (strain OS217 / ATCC BAA-1090 / DSM 15013) protein is ATP-dependent Clp protease proteolytic subunit.